The following is a 273-amino-acid chain: 3-methyl-2-oxobutanoate hydroxymethyltransferase (273 aa).

2 residues coordinate Mg(2+): D53 and D92. Residues 53–54, D92, and K120 contribute to the 3-methyl-2-oxobutanoate site; that span reads DS. Residue E122 coordinates Mg(2+). E189 acts as the Proton acceptor in catalysis.

It belongs to the PanB family. In terms of assembly, homodecamer; pentamer of dimers. Requires Mg(2+) as cofactor.

It localises to the cytoplasm. The enzyme catalyses 3-methyl-2-oxobutanoate + (6R)-5,10-methylene-5,6,7,8-tetrahydrofolate + H2O = 2-dehydropantoate + (6S)-5,6,7,8-tetrahydrofolate. It functions in the pathway cofactor biosynthesis; (R)-pantothenate biosynthesis; (R)-pantoate from 3-methyl-2-oxobutanoate: step 1/2. Its function is as follows. Catalyzes the reversible reaction in which hydroxymethyl group from 5,10-methylenetetrahydrofolate is transferred onto alpha-ketoisovalerate to form ketopantoate. This is 3-methyl-2-oxobutanoate hydroxymethyltransferase from Cupriavidus taiwanensis (strain DSM 17343 / BCRC 17206 / CCUG 44338 / CIP 107171 / LMG 19424 / R1) (Ralstonia taiwanensis (strain LMG 19424)).